Here is a 162-residue protein sequence, read N- to C-terminus: Corticoliberin-1 (162 aa).

A signal peptide spans 1–24 (MKLNFLVTTVALLVAFPPPYECRA). The propeptide occupies 25–119 (IDSSSNQPAT…ALDSEERERR (95 aa)). The residue at position 160 (F160) is a Phenylalanine amide.

This sequence belongs to the sauvagine/corticotropin-releasing factor/urotensin I family.

The protein resides in the secreted. This hormone from hypothalamus regulates the release of corticotropin from pituitary gland. The protein is Corticoliberin-1 (crf1) of Catostomus commersonii (White sucker).